The primary structure comprises 170 residues: Bacilliredoxin SRU_1493 (170 aa).

The tract at residues 140-170 (CGDEEPPADAPSRPDPSSSGEGLPSTFQSIT) is disordered.

Belongs to the bacilliredoxin family.

In Salinibacter ruber (strain DSM 13855 / M31), this protein is Bacilliredoxin SRU_1493.